Here is a 344-residue protein sequence, read N- to C-terminus: GDSL esterase/lipase At1g73610 (344 aa).

An N-terminal signal peptide occupies residues 1 to 24 (MNCLMFFKMLLAFSFISLFYVGNA). The N-linked (GlcNAc...) asparagine glycan is linked to Asn30. Ser42 acts as the Nucleophile in catalysis. Active-site residues include Asp319 and His322.

Belongs to the 'GDSL' lipolytic enzyme family.

The protein localises to the secreted. This chain is GDSL esterase/lipase At1g73610, found in Arabidopsis thaliana (Mouse-ear cress).